The chain runs to 605 residues: Mini-chromosome maintenance complex-binding protein (605 aa).

Phosphoserine occurs at positions 147 and 150.

This sequence belongs to the MCMBP family. In terms of assembly, interacts with the MCM complex.

The protein resides in the nucleus. Associated component of the MCM complex that acts as a regulator of DNA replication. Binds to the MCM complex during late S phase and may act by promoting the disassembly of the MCM complex from chromatin. This is Mini-chromosome maintenance complex-binding protein from Drosophila melanogaster (Fruit fly).